A 318-amino-acid polypeptide reads, in one-letter code: Pantothenate kinase (318 aa).

An ATP-binding site is contributed by 96 to 103 (GSVAVGKS).

It belongs to the prokaryotic pantothenate kinase family.

The protein resides in the cytoplasm. The catalysed reaction is (R)-pantothenate + ATP = (R)-4'-phosphopantothenate + ADP + H(+). It functions in the pathway cofactor biosynthesis; coenzyme A biosynthesis; CoA from (R)-pantothenate: step 1/5. The polypeptide is Pantothenate kinase (Rhodopseudomonas palustris (strain BisA53)).